A 132-amino-acid chain; its full sequence is ATP synthase epsilon chain (132 aa).

This sequence belongs to the ATPase epsilon chain family. As to quaternary structure, F-type ATPases have 2 components, CF(1) - the catalytic core - and CF(0) - the membrane proton channel. CF(1) has five subunits: alpha(3), beta(3), gamma(1), delta(1), epsilon(1). CF(0) has three main subunits: a, b and c.

It localises to the cell membrane. Produces ATP from ADP in the presence of a proton gradient across the membrane. This chain is ATP synthase epsilon chain, found in Clostridium kluyveri (strain NBRC 12016).